Here is a 444-residue protein sequence, read N- to C-terminus: Cobyrinate a,c-diamide synthase (444 aa).

The region spanning Ile250–Lys438 is the GATase cobBQ-type domain. The active-site Nucleophile is the Cys332.

The protein belongs to the CobB/CbiA family. Mg(2+) serves as cofactor.

It catalyses the reaction cob(II)yrinate + 2 L-glutamine + 2 ATP + 2 H2O = cob(II)yrinate a,c diamide + 2 L-glutamate + 2 ADP + 2 phosphate + 2 H(+). Its pathway is cofactor biosynthesis; adenosylcobalamin biosynthesis; cob(II)yrinate a,c-diamide from sirohydrochlorin (anaerobic route): step 10/10. Catalyzes the ATP-dependent amidation of the two carboxylate groups at positions a and c of cobyrinate, using either L-glutamine or ammonia as the nitrogen source. This Fusobacterium nucleatum subsp. nucleatum (strain ATCC 25586 / DSM 15643 / BCRC 10681 / CIP 101130 / JCM 8532 / KCTC 2640 / LMG 13131 / VPI 4355) protein is Cobyrinate a,c-diamide synthase.